A 326-amino-acid chain; its full sequence is Putative GTPase CC_2483 (326 aa).

GTP contacts are provided by residues 61–69 (GVPGAGKST), Asp-203, and 238–240 (SGL).

It belongs to the SIMIBI class G3E GTPase family. ArgK/MeaB subfamily.

Functionally, may have GTPase activity. May also bind and hydrolyze ATP. May function as chaperone. This Caulobacter vibrioides (strain ATCC 19089 / CIP 103742 / CB 15) (Caulobacter crescentus) protein is Putative GTPase CC_2483.